The sequence spans 229 residues: UPF0319 protein Sbal223_2728 (229 aa).

Positions 1 to 21 are cleaved as a signal peptide; sequence MKSLLPISSLLVLLGSASAFA.

It belongs to the UPF0319 family.

In Shewanella baltica (strain OS223), this protein is UPF0319 protein Sbal223_2728.